The chain runs to 249 residues: MASASGTMAKHEQILVLDPPTDLKFKGPFTDVVTTNLKLRNPSDRKVCFKVKTTAPRRYCVRPNSGIIDPGLTVTVSVMLQPFDYDPNEKSKHKFMVQTIFAPPNISDMEAVWKEAKPDELMDSKLRCVFEMPNENDKLNDMEPSKAVPLNAAKQDGPVPKPHSVSLSDTETRKLVEECKRLQGEMMKLSEENRLLRDEGLRLRKVAHSEKPGSTSAVSFRENVTSPLPSLLVVIAAIFIGFFLGKFIL.

Position 2 is an N-acetylalanine (Ala-2). Residues 2–227 (ASASGTMAKH…VSFRENVTSP (226 aa)) lie on the Cytoplasmic side of the membrane. The region spanning 14-131 (ILVLDPPTDL…MDSKLRCVFE (118 aa)) is the MSP domain. The tract at residues 50-53 (KVKT) is phosphorylated FFAT motif binding. N6-acetyllysine is present on Lys-125. A Phosphoserine modification is found at Ser-166. A coiled-coil region spans residues 169–205 (DTETRKLVEECKRLQGEMMKLSEENRLLRDEGLRLRK). Phosphothreonine is present on Thr-170. Phosphoserine occurs at positions 214, 216, and 219. The chain crosses the membrane as a helical; Anchor for type IV membrane protein span at residues 228 to 248 (LPSLLVVIAAIFIGFFLGKFI).

The protein belongs to the VAMP-associated protein (VAP) (TC 9.B.17) family. Homodimer; disulfide-linked. Heterodimer with VAPB. Interacts with VAMP1, VAMP2, STX1A, BET1, SEC22C and with the C-terminal domain of OCLN. Interacts (via MSP domain) with OSBPL1A (via FFAT motif). Interacts (via MSP domain) with ZFYVE27; may retain ZFYVE27 in the endoplasmic reticulum and regulate its function in cell projections formation. Interacts with OSBP. Interacts (via C-terminus) with RSAD2/viperin (via C-terminus). Interacts with IFITM3. Interacts with OSBPL3 (phosphorylated form). Interacts with KIF5A in a ZFYVE27-dependent manner. Interacts (via MSP domain) with STARD3 (via phosphorylated FFAT motif); this interaction recruits VAPA to the endosome. Interacts with STARD3NL (via FFAT motif). Interacts with CERT1. Interacts with PLEKHA3 and SACM1L to form a ternary complex. Interacts with VPS13A (via FFAT motif). Interacts with RB1CC1 (via phosphorylated FFAT motif), MIGA2 (via phosphorylated FFAT motif), RMDN3 (via phosphorylated FFAT motif), KCNB1 (via phosphorylated FFAT motif) and KCNB2 (via phosphorylated FFAT motif). Interacts (via MSP domain) with WDR44 (via FFAT-like motif); the interactions connect the endoplasmic reticulum (ER) with the endosomal tubule.

It localises to the endoplasmic reticulum membrane. Its subcellular location is the cell junction. It is found in the tight junction. The protein resides in the cell membrane. Functionally, endoplasmic reticulum (ER)-anchored protein that mediates the formation of contact sites between the ER and endosomes via interaction with FFAT motif-containing proteins such as STARD3 or WDR44. STARD3-VAPA interaction enables cholesterol transfer from the ER to endosomes. Via interaction with WDR44 participates in neosynthesized protein export. In addition, recruited to the plasma membrane through OSBPL3 binding. The OSBPL3-VAPA complex stimulates RRAS signaling which in turn attenuates integrin beta-1 (ITGB1) activation at the cell surface. With OSBPL3, may regulate ER morphology. May play a role in vesicle trafficking. The chain is Vesicle-associated membrane protein-associated protein A from Bos taurus (Bovine).